The following is a 116-amino-acid chain: NADH-ubiquinone oxidoreductase chain 3 (116 aa).

The next 3 membrane-spanning stretches (helical) occupy residues 3 to 23 (LITTIITITITLSAVLATVSF), 56 to 76 (FFLIAILFLLFDLEIALLLPL), and 87 to 107 (LTLVWSTAVLALLTLGLIYEW).

This sequence belongs to the complex I subunit 3 family.

It localises to the mitochondrion membrane. It carries out the reaction a ubiquinone + NADH + 5 H(+)(in) = a ubiquinol + NAD(+) + 4 H(+)(out). In terms of biological role, core subunit of the mitochondrial membrane respiratory chain NADH dehydrogenase (Complex I) that is believed to belong to the minimal assembly required for catalysis. Complex I functions in the transfer of electrons from NADH to the respiratory chain. The immediate electron acceptor for the enzyme is believed to be ubiquinone. This is NADH-ubiquinone oxidoreductase chain 3 (MT-ND3) from Oncorhynchus kisutch (Coho salmon).